The primary structure comprises 235 residues: Casparian strip membrane protein 2 (235 aa).

Residues 1–70 (MTSESATVIQ…RSGAEGFRRC (70 aa)) lie on the Cytoplasmic side of the membrane. A helical membrane pass occupies residues 71 to 91 (LAVIDFLLRVAAFGPTLAAAI). The Extracellular portion of the chain corresponds to 92 to 118 (STGTADERLSVFTNFFQFHARFDDFPA). The helical transmembrane segment at 119 to 139 (FTFFLVANAVAAGYLVLSLPF) threads the bilayer. At 140 to 162 (SVVVILRPNKATGGVRLLLLLCD) the chain is on the cytoplasmic side. Residues 163–183 (VLIMALLTAAGAAAAAIVYVA) form a helical membrane-spanning segment. The Extracellular portion of the chain corresponds to 184-210 (HSGNRRANWVPICMQFHGFCQRTSGSV). A helical transmembrane segment spans residues 211 to 231 (VATFLAVLVFIVLILMAACVI). At 232 to 235 (RRSK) the chain is on the cytoplasmic side.

The protein belongs to the Casparian strip membrane proteins (CASP) family. As to quaternary structure, homodimer and heterodimers.

It localises to the cell membrane. Regulates membrane-cell wall junctions and localized cell wall deposition. Required for establishment of the Casparian strip membrane domain (CSD) and the subsequent formation of Casparian strips, a cell wall modification of the root endodermis that determines an apoplastic barrier between the intraorganismal apoplasm and the extraorganismal apoplasm and prevents lateral diffusion. The protein is Casparian strip membrane protein 2 of Sorghum bicolor (Sorghum).